The chain runs to 424 residues: Putative chloroquine resistance transporter (424 aa).

Topologically, residues 1 to 56 (MTVIKKGKNKKKNLKNDDRYKELDSLITNGSEIGDNSGRSCIKRFFKIIGNEMKNN) are cytoplasmic. A helical transmembrane segment spans residues 57–77 (VYVYFLSILYLCVCVMNKVFA). Over 78–88 (KRTLNKMGNYS) the chain is Vacuolar. Asn86 carries N-linked (GlcNAc...) asparagine glycosylation. A helical transmembrane segment spans residues 89–109 (FVTSETHNIICIVVFQLLYFI). Residues 110 to 125 (YRKTSTSGYKNESQKN) are Cytoplasmic-facing. The chain crosses the membrane as a helical span at residues 126 to 146 (FGWQFFLISLLDASTVIISMI). Residues 147–156 (GLTRTTGNIQ) are Vacuolar-facing. Residues 157-177 (SFIMQLIIPVNMYFCFMFLGY) form a helical membrane-spanning segment. The Cytoplasmic segment spans residues 178-180 (RYH). A helical transmembrane segment spans residues 181 to 201 (LFNYLGAFIILITIAVVETFL). Over 202–209 (SFETQSEN) the chain is Vacuolar. A helical membrane pass occupies residues 210-230 (SIIFNLIMISALIPLSFSNMT). Residues 231–248 (REVVFKKHKINILRLNAM) lie on the Cytoplasmic side of the membrane. The helical transmembrane segment at 249 to 269 (VVLFQFFTSLLVLPVYNIPFL) threads the bilayer. Over 270–317 (KEIYMPFSEMSTNINNGLRCLFYGQNTVVENCGVGMVKMCDNCEGAWK) the chain is Vacuolar. Disulfide bonds link Cys289/Cys312 and Cys301/Cys309. Residues 318 to 338 (TFITFSFFNICDNLLACYIID) form a helical membrane-spanning segment. The Cytoplasmic portion of the chain corresponds to 339–346 (KFSTMTYT). Residues 347–367 (IVSCIQGPAITIAYYFKFLAG) traverse the membrane as a helical segment. Residues 368 to 377 (DAVRKPRILD) are Vacuolar-facing. Residues 378–398 (FLTLFGYLFGTIIYRIGNIIL) form a helical membrane-spanning segment. Over 399–424 (EKKKMVKSQNSNDSEAELTCIETSTA) the chain is Cytoplasmic.

The protein belongs to the CRT-like transporter family.

The protein resides in the vacuole membrane. Nutrient transporter. Involved in maintaining the osmotic homeostasis of the digestive vacuole. The sequence is that of Putative chloroquine resistance transporter from Plasmodium yoelii yoelii.